Reading from the N-terminus, the 163-residue chain is Protein-export protein SecB (163 aa).

It belongs to the SecB family. As to quaternary structure, homotetramer, a dimer of dimers. One homotetramer interacts with 1 SecA dimer.

It is found in the cytoplasm. Its function is as follows. One of the proteins required for the normal export of preproteins out of the cell cytoplasm. It is a molecular chaperone that binds to a subset of precursor proteins, maintaining them in a translocation-competent state. It also specifically binds to its receptor SecA. The protein is Protein-export protein SecB of Azotobacter vinelandii (strain DJ / ATCC BAA-1303).